Here is a 449-residue protein sequence, read N- to C-terminus: Interferon-related developmental regulator 1 (449 aa).

Positions 1 to 10 (MPKNKKRNAP) are enriched in basic residues. The disordered stretch occupies residues 1-41 (MPKNKKRNAPHRGGGGGGGSGAATSAATTGGPHRTVQPFSD). Over residues 12 to 21 (RGGGGGGGSG) the composition is skewed to gly residues. A compositionally biased stretch (low complexity) spans 22-31 (AATSAATTGG).

It belongs to the IFRD family. As to quaternary structure, interacts with PSIP1/LEDGF. Expressed at high levels in the embryonic brain in the period related to neuroblast proliferation and differentiation.

Its subcellular location is the cytoplasm. It localises to the cell membrane. The protein localises to the nucleus. Its function is as follows. Probably participates in neurogenesis. Could play a role in regulating gene activity in the proliferative and/or differentiative pathways induced by NGF. The chain is Interferon-related developmental regulator 1 (Ifrd1) from Rattus norvegicus (Rat).